A 241-amino-acid chain; its full sequence is Probable histone-lysine N-methyltransferase set-23 (241 aa).

A Pre-SET domain is found at 25 to 85 (QGCDCETQCS…SCRNKVVQNG (61 aa)). Residues C27, C29, C33, C39, C41, C64, C68, C70, and C77 each coordinate Zn(2+). The SET domain occupies 88–210 (KKLKIFSTSE…VGEELSYDYG (123 aa)). S-adenosyl-L-methionine contacts are provided by residues 98 to 100 (KGD), D138, Y140, R167, and 170 to 171 (NH). Residues C173, C222, C224, and C229 each coordinate Zn(2+). In terms of domain architecture, Post-SET spans 218-234 (NRKLCLCRSENCRKYLP).

It belongs to the class V-like SAM-binding methyltransferase superfamily. Histone-lysine methyltransferase family. Suvar3-9 subfamily.

Its subcellular location is the nucleus. The protein resides in the chromosome. The catalysed reaction is L-lysyl-[histone] + S-adenosyl-L-methionine = N(6)-methyl-L-lysyl-[histone] + S-adenosyl-L-homocysteine + H(+). Functionally, probable histone methyltransferase required for embryonic development. This Caenorhabditis briggsae protein is Probable histone-lysine N-methyltransferase set-23.